The chain runs to 778 residues: Ent-sandaracopimaradiene synthase KSL3, chloroplastic (778 aa).

The N-terminal 35 residues, 1-35, are a transit peptide targeting the chloroplast; it reads MLLTSTNTLKISSQRKEWEAKDLTGMFHGQVNGRV. Positions 527, 531, 670, 671, and 678 each coordinate Mg(2+). The DDXXD motif signature appears at 527–531; that stretch reads DDFFE.

This sequence belongs to the terpene synthase family. Mg(2+) serves as cofactor.

It localises to the plastid. Its subcellular location is the chloroplast. The catalysed reaction is ent-copalyl diphosphate = ent-sandaracopimara-8(14),15-diene + diphosphate. It carries out the reaction ent-copalyl diphosphate = ent-(12E)-labda-8(17),12,14-triene + diphosphate. It participates in secondary metabolite biosynthesis; terpenoid biosynthesis. Its function is as follows. Diterpene cyclase involved in the biosynthesis of labdane-related diterpenoids (LRDs) natural products. Catalyzes the cyclization of ent-CDP into ent-sandaracopimaradiene as a major, and ent-pimaradiene and ent-labdatriene as minor products. This chain is Ent-sandaracopimaradiene synthase KSL3, chloroplastic, found in Ricinus communis (Castor bean).